The sequence spans 110 residues: UPF0060 membrane protein MMAR_2961 (110 aa).

The next 4 membrane-spanning stretches (helical) occupy residues 6-26 (ILLF…VWQG), 32-52 (GLAW…VATL), 61-81 (ILAA…MAFD), and 90-110 (IVGA…PRAH).

This sequence belongs to the UPF0060 family.

The protein localises to the cell membrane. The sequence is that of UPF0060 membrane protein MMAR_2961 from Mycobacterium marinum (strain ATCC BAA-535 / M).